The sequence spans 171 residues: Co-chaperone protein HscB (171 aa).

The J domain maps to 2–74; that stretch reads DYFTLFGLPA…LMRAEYLLSL (73 aa).

Belongs to the HscB family. In terms of assembly, interacts with HscA and stimulates its ATPase activity. Interacts with IscU.

Co-chaperone involved in the maturation of iron-sulfur cluster-containing proteins. Seems to help targeting proteins to be folded toward HscA. The chain is Co-chaperone protein HscB from Escherichia coli (strain SE11).